A 349-amino-acid polypeptide reads, in one-letter code: Isopentenyl-diphosphate delta-isomerase (349 aa).

Position 12–13 (R12–K13) interacts with substrate. Residues G69–T71, S99, and N128 contribute to the FMN site. Residue Q158 coordinates substrate. E159 provides a ligand contact to Mg(2+). FMN contacts are provided by residues K189, S214, T219, G265–R267, and S286–G287.

Belongs to the IPP isomerase type 2 family. Homooctamer. Dimer of tetramers. It depends on FMN as a cofactor. Requires NADPH as cofactor. Mg(2+) serves as cofactor.

It localises to the cytoplasm. It carries out the reaction isopentenyl diphosphate = dimethylallyl diphosphate. In terms of biological role, involved in the biosynthesis of isoprenoids. Catalyzes the 1,3-allylic rearrangement of the homoallylic substrate isopentenyl (IPP) to its allylic isomer, dimethylallyl diphosphate (DMAPP). The chain is Isopentenyl-diphosphate delta-isomerase from Latilactobacillus sakei subsp. sakei (strain 23K) (Lactobacillus sakei subsp. sakei).